The following is a 527-amino-acid chain: uncharacterized protein (527 aa).

In terms of domain architecture, PE spans 1–93 (MSYMIAVPDM…AGAYASAEAT (93 aa)). Gly residues-rich tracts occupy residues 264–286 (IHGH…GVQG), 292–384 (GAAG…AGNG), and 472–515 (NGGD…GGSR). Disordered regions lie at residues 264–384 (IHGH…AGNG) and 472–527 (NGGD…TPGQ).

The protein belongs to the mycobacterial PE family. PGRS subfamily.

This is an uncharacterized protein from Mycobacterium tuberculosis (strain CDC 1551 / Oshkosh).